The primary structure comprises 1081 residues: Histone demethylase-like protein A (1081 aa).

The segment at 37–173 is disordered; the sequence is QHLQHPSLPN…LSGNTDYARY (137 aa). The span at 66-81 shows a compositional bias: low complexity; the sequence is SPSCNESNESNGETSS. A compositionally biased stretch (polar residues) spans 119 to 132; that stretch reads DTSNILSGSATSVS. Residues 141–161 are compositionally biased toward low complexity; it reads NSTPPSTVNNVPSSSSITSDS. In terms of domain architecture, SWIRM spans 192 to 287; sequence CVTAAYACRL…FGCVEIPPAL (96 aa). The interval 902–940 is disordered; sequence ATAQKKKEPPCSNGFSAPVSTSAHPTDASAPARSNNSFS. Polar residues predominate over residues 914–925; sequence NGFSAPVSTSAH. The segment at residues 969-1049 is a DNA-binding region (HMG box); that stretch reads ARTGLNPFLL…TNTEIWDRWK (81 aa).

This sequence belongs to the flavin monoamine oxidase family.

It is found in the nucleus. H3K4 demethylase-like protein. Might not act as a H3K4 demethylase or is not the major H3K4 demethylase since its deletion does not affect whole genome H3K4 methylation. The polypeptide is Histone demethylase-like protein A (Aspergillus fumigatus (strain ATCC MYA-4609 / CBS 101355 / FGSC A1100 / Af293) (Neosartorya fumigata)).